Here is a 712-residue protein sequence, read N- to C-terminus: Semaphorin-1A (712 aa).

The signal sequence occupies residues 1 to 20; the sequence is MVVKILVWSICLIALCHAWM. Residues 21-483 form the Sema domain; the sequence is PDSSSKLINH…GKDEIRLANL (463 aa). Over 21 to 601 the chain is Extracellular; sequence PDSSSKLINH…IGGCAVRQQL (581 aa). N-linked (GlcNAc...) asparagine glycosylation is found at asparagine 42 and asparagine 69. 2 disulfide bridges follow: cysteine 95-cysteine 105 and cysteine 123-cysteine 132. N-linked (GlcNAc...) asparagine glycosylation is found at asparagine 161 and asparagine 265. 4 disulfide bridges follow: cysteine 242–cysteine 357, cysteine 266–cysteine 316, cysteine 486–cysteine 503, and cysteine 495–cysteine 512. A helical transmembrane segment spans residues 602 to 622; that stretch reads VIYTAGTLHIVVVVVSIVGLF. Residues 623–712 lie on the Cytoplasmic side of the membrane; sequence SWLYSGLSVF…TLQKIKKTYI (90 aa).

Belongs to the semaphorin family.

It localises to the membrane. In terms of biological role, plays a role in growth cones guidance. The polypeptide is Semaphorin-1A (SEMA-1A) (Tribolium confusum (Confused flour beetle)).